The chain runs to 284 residues: 4-diphosphocytidyl-2-C-methyl-D-erythritol kinase (284 aa).

The active site involves Lys14. Residue 98 to 108 (PMGGGLGGGSS) participates in ATP binding. Asp140 is a catalytic residue.

This sequence belongs to the GHMP kinase family. IspE subfamily.

The enzyme catalyses 4-CDP-2-C-methyl-D-erythritol + ATP = 4-CDP-2-C-methyl-D-erythritol 2-phosphate + ADP + H(+). It functions in the pathway isoprenoid biosynthesis; isopentenyl diphosphate biosynthesis via DXP pathway; isopentenyl diphosphate from 1-deoxy-D-xylulose 5-phosphate: step 3/6. In terms of biological role, catalyzes the phosphorylation of the position 2 hydroxy group of 4-diphosphocytidyl-2C-methyl-D-erythritol. The protein is 4-diphosphocytidyl-2-C-methyl-D-erythritol kinase of Shewanella sp. (strain MR-7).